A 497-amino-acid chain; its full sequence is MEMILSISLCLTTLITLLLLRRFLKRTATKVNLPPSPWRLPVIGNLHQLSLHPHRSLRSLSLRYGPLMLLHFGRVPILVVSSGEAAQEVLKTHDHKFANRPRSKAVHGLMNGGRDVVFAPYGEYWRQMKSVCILNLLTNKMVESFEKVREDEVNAMIEKLEKASSSSSSENLSELFITLPSDVTSRVALGRKHSEDETARDLKKRVRQIMELLGEFPIGEYVPILAWIDGIRGFNNKIKEVSRGFSDLMDKVVQEHLEASNDKADFVDILLSIEKDKNSGFQVQRNDIKFMILDMFIGGTSTTSTLLEWTMTELIRSPKSMKKLQDEIRSTIRPHGSYIKEKEVENMKYLKAVIKEVLRLHPSLPMILPRLLSEDVKVKGYNIAAGTEVIINAWAIQRDTAIWGPDAEEFKPERHLDSGLDYHGKNLNYIPFGSGRRICPGINLALGLAEVTVANLVGRFDWRVEAGPNGDQPDLTEAIGIDVCRKFPLIAFPSSVV.

The chain crosses the membrane as a helical span at residues 2 to 20 (EMILSISLCLTTLITLLLL). Cys439 is a binding site for heme.

Belongs to the cytochrome P450 family.

Its subcellular location is the membrane. The catalysed reaction is (E)-(indol-3-yl)acetaldehyde oxime = (indol-3-yl)acetonitrile + H2O. Its function is as follows. Involved in the biosynthesis of the indole-derived phytoalexin camalexin. Catalyzes the conversion of indole-3-acetaldoxime to indole-3-acetonitrile. Required for resistance to A.brassicicola and B.cinerea. This is Indoleacetaldoxime dehydratase (CYP71A13) from Arabidopsis thaliana (Mouse-ear cress).